Here is a 347-residue protein sequence, read N- to C-terminus: Ribosomal RNA small subunit methyltransferase C (347 aa).

It belongs to the methyltransferase superfamily. RsmC family. In terms of assembly, monomer.

It localises to the cytoplasm. It carries out the reaction guanosine(1207) in 16S rRNA + S-adenosyl-L-methionine = N(2)-methylguanosine(1207) in 16S rRNA + S-adenosyl-L-homocysteine + H(+). Specifically methylates the guanine in position 1207 of 16S rRNA in the 30S particle. In Yersinia pseudotuberculosis serotype IB (strain PB1/+), this protein is Ribosomal RNA small subunit methyltransferase C.